The chain runs to 349 residues: Thiamine-phosphate synthase (349 aa).

Residues 1-125 (MGCESSLDPR…SAEAAAIRYG (125 aa)) are unknown. Positions 63 to 85 (RARSTVTDPGAGMEHPAQLDRHS) are disordered. Residues 126–349 (LYDLEVTCLT…LLSSLSRPTL (224 aa)) form a thiamine-phosphate synthase region. 4-amino-2-methyl-5-(diphosphooxymethyl)pyrimidine-binding positions include 177–181 (QHRCK) and asparagine 209. Residues aspartate 210 and aspartate 229 each coordinate Mg(2+). Residues serine 248 and lysine 277 each contribute to the 4-amino-2-methyl-5-(diphosphooxymethyl)pyrimidine site. Glycine 304 contributes to the 2-[(2R,5Z)-2-carboxy-4-methylthiazol-5(2H)-ylidene]ethyl phosphate binding site.

Belongs to the thiamine-phosphate synthase family. The cofactor is Mg(2+).

The catalysed reaction is 2-[(2R,5Z)-2-carboxy-4-methylthiazol-5(2H)-ylidene]ethyl phosphate + 4-amino-2-methyl-5-(diphosphooxymethyl)pyrimidine + 2 H(+) = thiamine phosphate + CO2 + diphosphate. It catalyses the reaction 2-(2-carboxy-4-methylthiazol-5-yl)ethyl phosphate + 4-amino-2-methyl-5-(diphosphooxymethyl)pyrimidine + 2 H(+) = thiamine phosphate + CO2 + diphosphate. It carries out the reaction 4-methyl-5-(2-phosphooxyethyl)-thiazole + 4-amino-2-methyl-5-(diphosphooxymethyl)pyrimidine + H(+) = thiamine phosphate + diphosphate. The protein operates within cofactor biosynthesis; thiamine diphosphate biosynthesis; thiamine phosphate from 4-amino-2-methyl-5-diphosphomethylpyrimidine and 4-methyl-5-(2-phosphoethyl)-thiazole: step 1/1. Its function is as follows. Condenses 4-methyl-5-(beta-hydroxyethyl)thiazole monophosphate (THZ-P) and 2-methyl-4-amino-5-hydroxymethyl pyrimidine pyrophosphate (HMP-PP) to form thiamine monophosphate (TMP). The sequence is that of Thiamine-phosphate synthase from Parasynechococcus marenigrum (strain WH8102).